The chain runs to 447 residues: Protein chibby homolog 2 (447 aa).

Serine 41, serine 85, serine 88, serine 96, serine 123, serine 143, serine 147, and serine 149 each carry phosphoserine. Positions 164-197 (EYLLQEENKSLRDENRALRDENKALRKENKILQV) form a coiled coil. Disordered stretches follow at residues 208–244 (HEES…KENT) and 266–320 (WAQA…EDSK). Phosphoserine occurs at positions 211 and 224. Basic and acidic residues predominate over residues 218 to 232 (LHKDTTSQEVVKKDN). The stretch at 237 to 264 (AQRSKENTLQFIREENRALQQLLEQRQA) forms a coiled coil. The segment covering 266 to 276 (WAQAEESATSA) has biased composition (low complexity). Phosphoserine occurs at positions 272 and 275. Positions 277 to 290 (EEGKPTSSPKEEPH) are enriched in basic and acidic residues. Serine 333 and serine 336 each carry phosphoserine. A coiled-coil region spans residues 354-412 (LQLLREMNQALQALREENRLLQEENRALHAMREEHRVFQEENKALWENNKLKLQQRLVI).

Belongs to the chibby family. SPERT subfamily. Homodimer. Binds to NEK1.

This chain is Protein chibby homolog 2 (Cby2), found in Rattus norvegicus (Rat).